The sequence spans 240 residues: Putative protein FAM10A4 (240 aa).

The tract at residues Met38–Glu94 is disordered. Positions Ala46–Glu69 are enriched in basic and acidic residues. Residues Ile85–Glu94 are compositionally biased toward acidic residues. TPR repeat units follow at residues Ala110 to Leu143, Ile145 to Ser177, and Gln179 to Glu211. Residues Val220–Glu240 form a disordered region. The segment covering Lys226–Glu240 has biased composition (basic and acidic residues).

Belongs to the FAM10 family. As to expression, highly expressed in bone marrow and weakly in placenta, pancreas, heart and HeLa cell line.

It is found in the cytoplasm. The polypeptide is Putative protein FAM10A4 (ST13P4) (Homo sapiens (Human)).